A 211-amino-acid chain; its full sequence is FMN-dependent NADH:quinone oxidoreductase 3 (211 aa).

Residue Ser-17 to Ser-19 participates in FMN binding.

Belongs to the azoreductase type 1 family. In terms of assembly, homodimer. FMN is required as a cofactor.

It carries out the reaction 2 a quinone + NADH + H(+) = 2 a 1,4-benzosemiquinone + NAD(+). It catalyses the reaction N,N-dimethyl-1,4-phenylenediamine + anthranilate + 2 NAD(+) = 2-(4-dimethylaminophenyl)diazenylbenzoate + 2 NADH + 2 H(+). Functionally, quinone reductase that provides resistance to thiol-specific stress caused by electrophilic quinones. Its function is as follows. Also exhibits azoreductase activity. Catalyzes the reductive cleavage of the azo bond in aromatic azo compounds to the corresponding amines. This is FMN-dependent NADH:quinone oxidoreductase 3 from Halalkalibacterium halodurans (strain ATCC BAA-125 / DSM 18197 / FERM 7344 / JCM 9153 / C-125) (Bacillus halodurans).